Here is an 81-residue protein sequence, read N- to C-terminus: MNQSAQNYFSVQKPSETSSGPYTSPPPIGYPTRDAVVGDPPAAAVETNSKGVNPEAIMSCFSTCMECIFCCGVCSSLCTSE.

Positions 1–22 are enriched in polar residues; it reads MNQSAQNYFSVQKPSETSSGPY. The segment at 1–34 is disordered; the sequence is MNQSAQNYFSVQKPSETSSGPYTSPPPIGYPTRD. A helical transmembrane segment spans residues 56-74; it reads AIMSCFSTCMECIFCCGVC.

This sequence belongs to the CYSTM1 family. Expressed at very low levels in seedlings and petioles, and at higher levels in leaves. Also present in phloem sap.

The protein resides in the cell membrane. Modulates resistance against pathogens including oomycetes (e.g. Hyaloperonospora parasitica and Phytophthora brassicae) and fungi (e.g. Phytophthora brassicae). Controls the abscisic acid-mediated (ABA) signaling pathways. Regulator of the flowering time in response to stress (e.g. UV-C). Regulates polar lipid content; promotes phosphatidylinositol (PI) and 18:0 but prevents 18:2 and 18:3 polar lipids accumulation. This Arabidopsis thaliana (Mouse-ear cress) protein is Cysteine-rich and transmembrane domain-containing protein PCC1 (PCC1).